A 387-amino-acid chain; its full sequence is Phosphoglycerate kinase (387 aa).

Residues 21–23 (DLN), Arg36, 59–62 (HLGR), Arg113, and Arg146 each bind substrate. ATP contacts are provided by residues Lys197, Glu314, and 340 to 343 (GGDT).

The protein belongs to the phosphoglycerate kinase family. In terms of assembly, monomer.

Its subcellular location is the cytoplasm. It carries out the reaction (2R)-3-phosphoglycerate + ATP = (2R)-3-phospho-glyceroyl phosphate + ADP. Its pathway is carbohydrate degradation; glycolysis; pyruvate from D-glyceraldehyde 3-phosphate: step 2/5. The chain is Phosphoglycerate kinase from Klebsiella pneumoniae (strain 342).